Here is a 474-residue protein sequence, read N- to C-terminus: tRNA-2-methylthio-N(6)-dimethylallyladenosine synthase (474 aa).

The 118-residue stretch at 3-120 (QKLHIKTWGC…LPEMINQIRG (118 aa)) folds into the MTTase N-terminal domain. Residues Cys-12, Cys-49, Cys-83, Cys-157, Cys-161, and Cys-164 each coordinate [4Fe-4S] cluster. One can recognise a Radical SAM core domain in the interval 143–375 (RAEGPTAFVS…QQRINNQAAQ (233 aa)). The region spanning 378-441 (RAMLGTEQRV…TNSLRGEVVR (64 aa)) is the TRAM domain.

Belongs to the methylthiotransferase family. MiaB subfamily. As to quaternary structure, monomer. The cofactor is [4Fe-4S] cluster.

It localises to the cytoplasm. The enzyme catalyses N(6)-dimethylallyladenosine(37) in tRNA + (sulfur carrier)-SH + AH2 + 2 S-adenosyl-L-methionine = 2-methylsulfanyl-N(6)-dimethylallyladenosine(37) in tRNA + (sulfur carrier)-H + 5'-deoxyadenosine + L-methionine + A + S-adenosyl-L-homocysteine + 2 H(+). In terms of biological role, catalyzes the methylthiolation of N6-(dimethylallyl)adenosine (i(6)A), leading to the formation of 2-methylthio-N6-(dimethylallyl)adenosine (ms(2)i(6)A) at position 37 in tRNAs that read codons beginning with uridine. This is tRNA-2-methylthio-N(6)-dimethylallyladenosine synthase from Pasteurella multocida (strain Pm70).